We begin with the raw amino-acid sequence, 124 residues long: Ragulator complex protein LAMTOR2 homolog (124 aa).

Belongs to the GAMAD family. Part of the Ragulator complex.

Its function is as follows. Regulator of the TOR pathway, a signaling cascade that promotes cell growth in response to growth factors, energy levels, and amino acids. May activate the TOR signaling cascade in response to amino acids. This Caenorhabditis elegans protein is Ragulator complex protein LAMTOR2 homolog.